A 325-amino-acid polypeptide reads, in one-letter code: Elongation factor P--(R)-beta-lysine ligase (325 aa).

76–78 contributes to the substrate binding site; the sequence is SPE. ATP-binding positions include 100–102 and asparagine 109; that span reads RNE. Substrate is bound at residue tyrosine 118. Position 244 to 245 (244 to 245) interacts with ATP; sequence EL. Glutamate 251 provides a ligand contact to substrate. Glycine 300 provides a ligand contact to ATP.

Belongs to the class-II aminoacyl-tRNA synthetase family. EpmA subfamily. As to quaternary structure, homodimer.

It catalyses the reaction D-beta-lysine + L-lysyl-[protein] + ATP = N(6)-((3R)-3,6-diaminohexanoyl)-L-lysyl-[protein] + AMP + diphosphate + H(+). With EpmB is involved in the beta-lysylation step of the post-translational modification of translation elongation factor P (EF-P). Catalyzes the ATP-dependent activation of (R)-beta-lysine produced by EpmB, forming a lysyl-adenylate, from which the beta-lysyl moiety is then transferred to the epsilon-amino group of a conserved specific lysine residue in EF-P. This chain is Elongation factor P--(R)-beta-lysine ligase, found in Erwinia tasmaniensis (strain DSM 17950 / CFBP 7177 / CIP 109463 / NCPPB 4357 / Et1/99).